A 245-amino-acid chain; its full sequence is Major prion protein (245 aa).

Positions 1-22 (MANLGCWMLVVFVATWSDLGLC) are cleaved as a signal peptide. Residues 23-222 (KKRPKPGGWN…ESQAYYQRGS (200 aa)) form an interaction with GRB2, ERI3 and SYN1 region. Residues 25-102 (RPKPGGWNTG…KPSKPKTSMK (78 aa)) are disordered. 4 consecutive repeat copies span residues 51 to 59 (PQGGGGWGQ), 60 to 67 (PHGGGWGQ), 68 to 75 (PHGGGWGQ), and 76 to 83 (PHGGGWGQ). The 4 X 8 AA tandem repeats of P-H-G-G-G-W-G-Q stretch occupies residues 51–83 (PQGGGGWGQPHGGGWGQPHGGGWGQPHGGGWGQ). Residues 52-87 (QGGGGWGQPHGGGWGQPHGGGWGQPHGGGWGQGGGT) are compositionally biased toward gly residues. The Cu(2+) site is built by Gly-54, Gly-55, His-61, Gly-62, Gly-63, His-69, Gly-70, Gly-71, His-77, Gly-78, and Gly-79. The span at 90–101 (QWHKPSKPKTSM) shows a compositional bias: basic residues. Residues Cys-171 and Cys-206 are joined by a disulfide bond. Asn-173 and Asn-189 each carry an N-linked (GlcNAc...) asparagine glycan. Residue Ser-222 is the site of GPI-anchor amidated serine attachment. Residues 223–245 (SMVLFSSPPVILLISFLIFLIVG) constitute a propeptide, removed in mature form.

It belongs to the prion family. In terms of assembly, monomer and homodimer. Has a tendency to aggregate into amyloid fibrils containing a cross-beta spine, formed by a steric zipper of superposed beta-strands. Soluble oligomers may represent an intermediate stage on the path to fibril formation. Copper binding may promote oligomerization. Interacts with GRB2, APP, ERI3/PRNPIP and SYN1. Mislocalized cytosolically exposed PrP interacts with MGRN1; this interaction alters MGRN1 subcellular location and causes lysosomal enlargement. Interacts with KIAA1191.

The protein localises to the cell membrane. It localises to the golgi apparatus. Its primary physiological function is unclear. Has cytoprotective activity against internal or environmental stresses. May play a role in neuronal development and synaptic plasticity. May be required for neuronal myelin sheath maintenance. May play a role in iron uptake and iron homeostasis. Soluble oligomers are toxic to cultured neuroblastoma cells and induce apoptosis (in vitro). Association with GPC1 (via its heparan sulfate chains) targets PRNP to lipid rafts. Also provides Cu(2+) or Zn(2+) for the ascorbate-mediated GPC1 deaminase degradation of its heparan sulfate side chains. The chain is Major prion protein (PRNP) from Cercopithecus diana (Diana monkey).